A 700-amino-acid chain; its full sequence is Methionine--tRNA ligase (700 aa).

A 'HIGH' region motif is present at residues 12–22 (PYANGNFHIGH). 4 residues coordinate Zn(2+): Cys-143, Cys-146, Cys-156, and Cys-159. Residues 348-352 (KMSKS) carry the 'KMSKS' region motif. Lys-351 is an ATP binding site. The 107-residue stretch at 594-700 (DFSKIDLRIA…AGAQPGMRVH (107 aa)) folds into the tRNA-binding domain.

It belongs to the class-I aminoacyl-tRNA synthetase family. MetG type 1 subfamily. Homodimer. Zn(2+) serves as cofactor.

It localises to the cytoplasm. It catalyses the reaction tRNA(Met) + L-methionine + ATP = L-methionyl-tRNA(Met) + AMP + diphosphate. In terms of biological role, is required not only for elongation of protein synthesis but also for the initiation of all mRNA translation through initiator tRNA(fMet) aminoacylation. The chain is Methionine--tRNA ligase from Albidiferax ferrireducens (strain ATCC BAA-621 / DSM 15236 / T118) (Rhodoferax ferrireducens).